Consider the following 331-residue polypeptide: Ketol-acid reductoisomerase (NADP(+)) (331 aa).

The region spanning 2–181 (TKVYYEDAVK…GATRAGVIET (180 aa)) is the KARI N-terminal Rossmann domain. NADP(+)-binding positions include 25–28 (YGSQ), Arg48, Ser52, and 82–85 (DETQ). Residue His107 is part of the active site. Gly133 is an NADP(+) binding site. A KARI C-terminal knotted domain is found at 182–327 (TFKEETETDL…AELREMMPFV (146 aa)). Asp190, Glu194, Glu226, and Glu230 together coordinate Mg(2+). Ser251 provides a ligand contact to substrate.

The protein belongs to the ketol-acid reductoisomerase family. Mg(2+) is required as a cofactor.

The catalysed reaction is (2R)-2,3-dihydroxy-3-methylbutanoate + NADP(+) = (2S)-2-acetolactate + NADPH + H(+). The enzyme catalyses (2R,3R)-2,3-dihydroxy-3-methylpentanoate + NADP(+) = (S)-2-ethyl-2-hydroxy-3-oxobutanoate + NADPH + H(+). Its pathway is amino-acid biosynthesis; L-isoleucine biosynthesis; L-isoleucine from 2-oxobutanoate: step 2/4. It participates in amino-acid biosynthesis; L-valine biosynthesis; L-valine from pyruvate: step 2/4. In terms of biological role, involved in the biosynthesis of branched-chain amino acids (BCAA). Catalyzes an alkyl-migration followed by a ketol-acid reduction of (S)-2-acetolactate (S2AL) to yield (R)-2,3-dihydroxy-isovalerate. In the isomerase reaction, S2AL is rearranged via a Mg-dependent methyl migration to produce 3-hydroxy-3-methyl-2-ketobutyrate (HMKB). In the reductase reaction, this 2-ketoacid undergoes a metal-dependent reduction by NADPH to yield (R)-2,3-dihydroxy-isovalerate. The polypeptide is Ketol-acid reductoisomerase (NADP(+)) (Listeria monocytogenes serovar 1/2a (strain ATCC BAA-679 / EGD-e)).